The chain runs to 215 residues: Sperm acrosome membrane-associated protein 3 (215 aa).

Topologically, residues 1–63 (MVSALRGAPL…EARSRALRRR (63 aa)) are cytoplasmic. A helical; Signal-anchor for type II membrane protein membrane pass occupies residues 64 to 84 (WCPAGIMLLALVCLLSCLLPS). The Extracellular segment spans residues 85–215 (SEAKLYGRCE…LTEWVDGCDF (131 aa)). The region spanning 88–215 (KLYGRCELAR…LTEWVDGCDF (128 aa)) is the C-type lysozyme domain. Cystine bridges form between Cys-93/Cys-213, Cys-117/Cys-201, Cys-151/Cys-166, and Cys-162/Cys-180.

This sequence belongs to the glycosyl hydrolase 22 family. In terms of assembly, interacts with ASTL. The processed form derives from the membrane form by proteolytic processing. The processed form is expressed in sperm (at protein level). Expressed in testis, epididymis and placenta.

The protein localises to the cytoplasmic vesicle. Its subcellular location is the secretory vesicle. The protein resides in the acrosome membrane. It is found in the secreted. Sperm surface membrane protein that may be involved in sperm-egg plasma membrane adhesion and fusion during fertilization. It could be a potential receptor for the egg oligosaccharide residue N-acetylglucosamine, which is present in the extracellular matrix over the egg plasma membrane. The processed form has no detectable bacteriolytic activity in vitro. The sequence is that of Sperm acrosome membrane-associated protein 3 (SPACA3) from Homo sapiens (Human).